A 231-amino-acid chain; its full sequence is uncharacterized protein (231 aa).

The SWIM-type zinc-finger motif lies at 43-76 (YKVKVDLDNNYFGLCTCQYKYNCKHAYALIEAYE).

This is an uncharacterized protein from Methanocaldococcus jannaschii (strain ATCC 43067 / DSM 2661 / JAL-1 / JCM 10045 / NBRC 100440) (Methanococcus jannaschii).